A 221-amino-acid polypeptide reads, in one-letter code: UPF0758 protein YicR (221 aa).

The MPN domain maps to 99–221 (ALLSPEMTRE…YVSFAERGWI (123 aa)). Positions 170, 172, and 183 each coordinate Zn(2+). The short motif at 170–183 (HNHPSGCAEPSKAD) is the JAMM motif element.

It belongs to the UPF0758 family. YicR subfamily.

The polypeptide is UPF0758 protein YicR (Salmonella paratyphi A (strain ATCC 9150 / SARB42)).